The sequence spans 299 residues: Sulfate adenylyltransferase subunit 2 (299 aa).

It belongs to the PAPS reductase family. CysD subfamily. In terms of assembly, sulfate-activating enzymes, NodP and NodQ, may be physically associated.

It carries out the reaction sulfate + ATP + H(+) = adenosine 5'-phosphosulfate + diphosphate. In terms of biological role, proposed to provide activated sulfate for transfer to nod factor. This Rhizobium tropici protein is Sulfate adenylyltransferase subunit 2 (nodP).